A 127-amino-acid chain; its full sequence is Cuticle protein 4 (127 aa).

Position 1 is a pyrrolidone carboxylic acid (Gln1). A run of 2 repeats spans residues 31-39 (PADTKKAEI) and 84-92 (PADTKKAEI).

The sequence is that of Cuticle protein 4 from Blaberus craniifer (Death's head cockroach).